The chain runs to 1025 residues: Multidrug resistance protein MdtC (1025 aa).

Helical transmembrane passes span 3–23 (FFAL…AITL), 333–353 (EVEQ…FLFL), 360–380 (IIPA…MYLC), 387–407 (LSLM…IVVL), 431–451 (VGFT…PLLL), 463–483 (FAVT…TLTP), 528–548 (LVGM…ISIP), 853–873 (VILI…LYES), 875–895 (VHPL…LLAL), 897–917 (LFNA…IGIV), 953–973 (PIMM…LSGG), and 984–1004 (ITIV…TPVV).

Belongs to the resistance-nodulation-cell division (RND) (TC 2.A.6) family. MdtC subfamily. In terms of assembly, part of a tripartite efflux system composed of MdtA, MdtB and MdtC. MdtC forms a heteromultimer with MdtB.

Its subcellular location is the cell inner membrane. Its function is as follows. The MdtABC tripartite complex confers resistance against novobiocin and deoxycholate. This is Multidrug resistance protein MdtC from Escherichia coli O157:H7 (strain EC4115 / EHEC).